Here is a 1322-residue protein sequence, read N- to C-terminus: Putative DNA ligase 4 (1322 aa).

ATP is bound by residues Glu-265, Lys-267, Arg-272, Arg-287, Glu-317, Phe-387, Glu-497, Lys-502, Arg-513, Lys-519, and Lys-521. Catalysis depends on Lys-267, which acts as the N6-AMP-lysine intermediate. A Mg(2+)-binding site is contributed by Glu-317. Glu-497 serves as a coordination point for Mg(2+). 2 BRCT domains span residues Leu-686–Asp-768 and Glu-825–Leu-935. Disordered stretches follow at residues Ile-945–Cys-1212 and Ala-1245–Ser-1310. The span at Asp-957–His-969 shows a compositional bias: basic and acidic residues. Basic residues-rich tracts occupy residues Val-970–Arg-979 and Pro-994–Gln-1005. Composition is skewed to basic and acidic residues over residues Ala-1007–Thr-1022 and Asn-1033–Val-1047. Positions Pro-1051 to His-1063 are enriched in basic residues. Composition is skewed to basic and acidic residues over residues Asp-1082 to Gly-1104, Ala-1125 to Glu-1161, and Pro-1190 to Ala-1204. Over residues Ser-1261–Ser-1288 the composition is skewed to low complexity.

It belongs to the ATP-dependent DNA ligase family. Requires Mg(2+) as cofactor.

Its subcellular location is the nucleus. It carries out the reaction ATP + (deoxyribonucleotide)n-3'-hydroxyl + 5'-phospho-(deoxyribonucleotide)m = (deoxyribonucleotide)n+m + AMP + diphosphate.. Functionally, DNA ligase involved in DNA non-homologous end joining (NHEJ); required for double-strand break (DSB) repair. This Oryza sativa subsp. japonica (Rice) protein is Putative DNA ligase 4 (LIG4).